A 189-amino-acid chain; its full sequence is Peptidyl-tRNA hydrolase (189 aa).

Position 15 (tyrosine 15) interacts with tRNA. The active-site Proton acceptor is histidine 20. Residues phenylalanine 66, asparagine 68, and asparagine 114 each contribute to the tRNA site.

Belongs to the PTH family. Monomer.

It localises to the cytoplasm. The enzyme catalyses an N-acyl-L-alpha-aminoacyl-tRNA + H2O = an N-acyl-L-amino acid + a tRNA + H(+). Its function is as follows. Hydrolyzes ribosome-free peptidyl-tRNAs (with 1 or more amino acids incorporated), which drop off the ribosome during protein synthesis, or as a result of ribosome stalling. Catalyzes the release of premature peptidyl moieties from peptidyl-tRNA molecules trapped in stalled 50S ribosomal subunits, and thus maintains levels of free tRNAs and 50S ribosomes. This chain is Peptidyl-tRNA hydrolase, found in Streptococcus pneumoniae (strain CGSP14).